A 258-amino-acid polypeptide reads, in one-letter code: Shikimate dehydrogenase (NADP(+)) (258 aa).

Shikimate is bound by residues 14-16 and T61; that span reads SES. Residue K65 is the Proton acceptor of the active site. Residues N86 and D101 each coordinate shikimate. NADP(+) is bound by residues 125-129 and L211; that span reads GSGGS. Y213 provides a ligand contact to shikimate. Residue G234 coordinates NADP(+).

Belongs to the shikimate dehydrogenase family. Homodimer.

The enzyme catalyses shikimate + NADP(+) = 3-dehydroshikimate + NADPH + H(+). Its pathway is metabolic intermediate biosynthesis; chorismate biosynthesis; chorismate from D-erythrose 4-phosphate and phosphoenolpyruvate: step 4/7. Its function is as follows. Involved in the biosynthesis of the chorismate, which leads to the biosynthesis of aromatic amino acids. Catalyzes the reversible NADPH linked reduction of 3-dehydroshikimate (DHSA) to yield shikimate (SA). The sequence is that of Shikimate dehydrogenase (NADP(+)) from Clostridium botulinum (strain Loch Maree / Type A3).